A 544-amino-acid polypeptide reads, in one-letter code: Chaperonin GroEL 1 (544 aa).

Residues Thr-29 to Pro-32, Asp-86 to Thr-90, Gly-413, Asn-479 to Ala-481, and Asp-495 each bind ATP.

This sequence belongs to the chaperonin (HSP60) family. In terms of assembly, forms a cylinder of 14 subunits composed of two heptameric rings stacked back-to-back. Interacts with the co-chaperonin GroES.

Its subcellular location is the cytoplasm. The enzyme catalyses ATP + H2O + a folded polypeptide = ADP + phosphate + an unfolded polypeptide.. Functionally, together with its co-chaperonin GroES, plays an essential role in assisting protein folding. The GroEL-GroES system forms a nano-cage that allows encapsulation of the non-native substrate proteins and provides a physical environment optimized to promote and accelerate protein folding. The chain is Chaperonin GroEL 1 from Parasynechococcus marenigrum (strain WH8102).